We begin with the raw amino-acid sequence, 237 residues long: Putative HTH-type transcriptional regulator ycf28 (237 aa).

In terms of domain architecture, HTH crp-type spans 155–228 (KSITNRLISL…KKKVIIHDPI (74 aa)). Residues 188–207 (HKVLAQIIGSNRVSITRIIS) constitute a DNA-binding region (H-T-H motif).

The protein resides in the plastid. It localises to the chloroplast. This Porphyra purpurea (Red seaweed) protein is Putative HTH-type transcriptional regulator ycf28 (ycf28).